Reading from the N-terminus, the 370-residue chain is Glutathione S-transferase omega-like 2 (370 aa).

Residue Arg15 participates in glutathione binding. The active-site Nucleophile is the Cys46. 5 residues coordinate glutathione: Trp79, Arg155, Val158, Glu173, and Ser174. A GST C-terminal domain is found at Pro201–Ile353.

It belongs to the GST superfamily. Omega family. As to quaternary structure, homodimer.

Its subcellular location is the cytoplasm. The catalysed reaction is RX + glutathione = an S-substituted glutathione + a halide anion + H(+). It catalyses the reaction L-dehydroascorbate + 2 glutathione = glutathione disulfide + L-ascorbate. Active as '1-Cys' thiol transferase against beta-hydroxyethyl disulfide (HED), as dehydroascorbate reductase and as dimethylarsinic acid reductase, while not active against the standard GST substrate 1-chloro-2,4-dinitrobenzene (CDNB). May be involved in cell wall organization and biogenesis. This Saccharomyces cerevisiae (strain ATCC 204508 / S288c) (Baker's yeast) protein is Glutathione S-transferase omega-like 2.